A 275-amino-acid polypeptide reads, in one-letter code: Probable dual specificity protein phosphatase DDB_G0271350 (275 aa).

Positions 2-143 (GISMILDNFL…LCDLELKLTN (142 aa)) constitute a Tyrosine-protein phosphatase domain. Cysteine 87 (phosphocysteine intermediate) is an active-site residue.

Belongs to the protein-tyrosine phosphatase family. Non-receptor class dual specificity subfamily.

The catalysed reaction is O-phospho-L-tyrosyl-[protein] + H2O = L-tyrosyl-[protein] + phosphate. The enzyme catalyses O-phospho-L-seryl-[protein] + H2O = L-seryl-[protein] + phosphate. It catalyses the reaction O-phospho-L-threonyl-[protein] + H2O = L-threonyl-[protein] + phosphate. In terms of biological role, has a dual specificity toward Ser/Thr and Tyr-containing proteins. This is Probable dual specificity protein phosphatase DDB_G0271350 from Dictyostelium discoideum (Social amoeba).